We begin with the raw amino-acid sequence, 211 residues long: uncharacterized protein (211 aa).

The protein belongs to the A.longa ORF167/ORF288 family.

Its subcellular location is the plastid. This is an uncharacterized protein from Euglena longa (Euglenophycean alga).